The chain runs to 232 residues: Large ribosomal subunit protein uL1 (232 aa).

Belongs to the universal ribosomal protein uL1 family. Part of the 50S ribosomal subunit.

In terms of biological role, binds directly to 23S rRNA. The L1 stalk is quite mobile in the ribosome, and is involved in E site tRNA release. Protein L1 is also a translational repressor protein, it controls the translation of the L11 operon by binding to its mRNA. The polypeptide is Large ribosomal subunit protein uL1 (Chlamydia trachomatis serovar L2b (strain UCH-1/proctitis)).